Here is a 347-residue protein sequence, read N- to C-terminus: Ryncolin-2 (347 aa).

The first 19 residues, 1–19 (MKPWAAFHLIFLVASSLEG), serve as a signal peptide directing secretion. The interval 49–115 (LQSQPGIPGI…DKGDKGDKGD (67 aa)) is disordered. The Collagen-like domain maps to 57-114 (GIPGVPGINGSEGLKGDPGPQGLPGETGFDGIPGVAGPKGDKGDQGDKGDKGDKGDKG). Residues 95 to 115 (KGDKGDQGDKGDKGDKGDKGD) are compositionally biased toward basic and acidic residues. In terms of domain architecture, Fibrinogen C-terminal spans 121–341 (DCPPTDVEVR…YADMKIRPQQ (221 aa)). 2 cysteine pairs are disulfide-bonded: cysteine 132-cysteine 160 and cysteine 284-cysteine 297.

This sequence belongs to the ficolin lectin family. Veficolin subfamily. Post-translationally, hydroxylated, possibly at Pro-74 and Pro-94. Expressed by the venom duct.

It is found in the secreted. Initiates complement activation and/or interferes in platelet aggregation and/or blood coagulation. This is Ryncolin-2 from Cerberus rynchops (Dog-faced water snake).